A 456-amino-acid chain; its full sequence is UDP-N-acetylmuramoylalanine--D-glutamate ligase (456 aa).

An ATP-binding site is contributed by 119–125; sequence GSNGKTT.

Belongs to the MurCDEF family.

It is found in the cytoplasm. The catalysed reaction is UDP-N-acetyl-alpha-D-muramoyl-L-alanine + D-glutamate + ATP = UDP-N-acetyl-alpha-D-muramoyl-L-alanyl-D-glutamate + ADP + phosphate + H(+). Its pathway is cell wall biogenesis; peptidoglycan biosynthesis. Cell wall formation. Catalyzes the addition of glutamate to the nucleotide precursor UDP-N-acetylmuramoyl-L-alanine (UMA). In Limosilactobacillus reuteri (strain DSM 20016) (Lactobacillus reuteri), this protein is UDP-N-acetylmuramoylalanine--D-glutamate ligase.